We begin with the raw amino-acid sequence, 116 residues long: Omega-ctenitoxin-Pn3a (116 aa).

The N-terminal stretch at 1 to 19 (MKMKLLGIILLVSFPFVLG) is a signal peptide. The propeptide occupies 20-38 (FAGIPIEEGENSVEVGEVE). 7 cysteine pairs are disulfide-bonded: C41-C58, C48-C64, C55-C90, C57-C78, C66-C76, C96-C102, and C106-C111. Histidine amide is present on H115.

Belongs to the neurotoxin 04 (omega-agtx) family. 03 (type II/III omega-agtx) subfamily. In terms of tissue distribution, expressed by the venom gland.

It is found in the secreted. This toxin is a potent and practically irreversible antagonist of both Cav2.1/CACNA1A and Cav2.2/CACNA1B calcium channels, while it displays a partial and rapidly reversible block of Cav2.3/CACNA1E calcium channels and no effect on Cav3/CACNA1 calcium channels. Inhibits glutamate uptake from rat brain synaptosomes by an interaction between cysteines from both glutamate transporter and toxin. Blocks potassium-induced exocytosis of synaptic vesicles in brain cortical synaptosomes (IC(50)=1.1 nM). In rat brain, inhibits glutamate release, neuronal death and loss of neurotransmission in the hippocampus resulting from ischemia. In vivo, induces rapid general flaccid paralysis followed by death in 10-30 minutes at dose levels of 5 ug per mouse. The protein is Omega-ctenitoxin-Pn3a of Phoneutria nigriventer (Brazilian armed spider).